An 858-amino-acid chain; its full sequence is Taste receptor type 1 member 3 (858 aa).

The signal sequence occupies residues 1–20 (MPALAIMGLSLAAFLELGMG). Topologically, residues 21–572 (ASLCLSQQFK…RPKFLAWGEP (552 aa)) are extracellular. N-linked (GlcNAc...) asparagine; when associated with variant T-60 glycosylation is present at Asn58. Residues Asn85, Asn130, Asn203, Asn264, Asn379, Asn387, Asn418, Asn439, and Asn482 are each glycosylated (N-linked (GlcNAc...) asparagine). The chain crosses the membrane as a helical span at residues 573–593 (VVLSLLLLLCLVLGLALAALG). At 594–610 (LSVHHWDSPLVQASGGS) the chain is on the cytoplasmic side. Residues 611–631 (QFCFGLICLGLFCLSVLLFPG) traverse the membrane as a helical segment. The Extracellular segment spans residues 632 to 644 (RPSSASCLAQQPM). The helical transmembrane segment at 645–665 (AHLPLTGCLSTLFLQAAETFV) threads the bilayer. The Cytoplasmic portion of the chain corresponds to 666–687 (ESELPLSWANWLCSYLRGLWAW). A helical transmembrane segment spans residues 688-708 (LVVLLATFVEAALCAWYLIAF). The Extracellular portion of the chain corresponds to 709–735 (PPEVVTDWSVLPTEVLEHCHVRSWVSL). Residues 736-756 (GLVHITNAMLAFLCFLGTFLV) form a helical membrane-spanning segment. Topologically, residues 757-767 (QSQPGRYNRAR) are cytoplasmic. A helical transmembrane segment spans residues 768-788 (GLTFAMLAYFITWVSFVPLLA). The Extracellular segment spans residues 789–796 (NVQVAYQP). A helical transmembrane segment spans residues 797–817 (AVQMGAILVCALGILVTFHLP). The Cytoplasmic portion of the chain corresponds to 818–858 (KCYVLLWLPKLNTQEFFLGRNAKKAADENSGGGEAAQGHNE).

This sequence belongs to the G-protein coupled receptor 3 family. TAS1R subfamily. As to quaternary structure, forms homodimers or heterodimers with TAS1R1 and TAS1R2. In terms of processing, the Thr-60 variant is predicted to introduce a novel N-linked glycosylation site at Asn-58. The addition of even a short carbohydrate group at Asn-58 is predicted to disrupt one of the contact surfaces required for stability of a dimer. Therefore a Thr-60 variant N-glycosylated at Asn-58 is predicted to be precluded from forming homodimers or heterodimers. As to expression, expressed in circumvallate, foliate and fungiform taste papillae as well as in taste buds on the palate. Also expressed in testis. Not expressed in brain, heart, kidney, liver or spleen. The topographic distribution in various taste papillae is different from those of other T1R members.

It localises to the cell membrane. Its function is as follows. Putative taste receptor. TAS1R1/TAS1R3 responds to the umami taste stimulus (the taste of monosodium glutamate) and also to most of the 20 standard L-amino acids, but not to their D-enantiomers or other compounds. TAS1R2/TAS1R3 recognizes diverse natural and synthetic sweeteners. TAS1R3 is essential for the recognition and response to the disaccharide trehalose. Sequence differences within and between species can significantly influence the selectivity and specificity of taste responses. The sequence is that of Taste receptor type 1 member 3 (Tas1r3) from Mus musculus (Mouse).